A 443-amino-acid chain; its full sequence is Probable glycine dehydrogenase (decarboxylating) subunit 1 (443 aa).

Belongs to the GcvP family. N-terminal subunit subfamily. As to quaternary structure, the glycine cleavage system is composed of four proteins: P, T, L and H. In this organism, the P 'protein' is a heterodimer of two subunits.

The catalysed reaction is N(6)-[(R)-lipoyl]-L-lysyl-[glycine-cleavage complex H protein] + glycine + H(+) = N(6)-[(R)-S(8)-aminomethyldihydrolipoyl]-L-lysyl-[glycine-cleavage complex H protein] + CO2. Its function is as follows. The glycine cleavage system catalyzes the degradation of glycine. The P protein binds the alpha-amino group of glycine through its pyridoxal phosphate cofactor; CO(2) is released and the remaining methylamine moiety is then transferred to the lipoamide cofactor of the H protein. The sequence is that of Probable glycine dehydrogenase (decarboxylating) subunit 1 from Maridesulfovibrio salexigens (strain ATCC 14822 / DSM 2638 / NCIMB 8403 / VKM B-1763) (Desulfovibrio salexigens).